A 246-amino-acid polypeptide reads, in one-letter code: Tyrosine recombinase XerD-like (246 aa).

In terms of domain architecture, Core-binding (CB) spans 1–72 (MINDINNFIE…AVNQFLFFLY (72 aa)). The Tyr recombinase domain occupies 84–246 (QETEKITLTQ…TPITLERYYR (163 aa)). Residues lysine 149 and arginine 212 contribute to the active site. Residue tyrosine 244 is the O-(3'-phospho-DNA)-tyrosine intermediate of the active site.

This sequence belongs to the 'phage' integrase family. XerD-like subfamily.

Its subcellular location is the cytoplasm. Its function is as follows. Putative tyrosine recombinase. Not involved in the cutting and rejoining of the recombining DNA molecules on dif(SL) site. The chain is Tyrosine recombinase XerD-like from Streptococcus agalactiae serotype III (strain NEM316).